The primary structure comprises 2222 residues: Voltage-dependent R-type calcium channel subunit alpha-1E (2222 aa).

At 1 to 40 (MALYNPIPVRQNCFTVNRSLFIFGEDNIVRKYAKKLIDWP) the chain is on the cytoplasmic side. One copy of the I repeat lies at 27 to 305 (NIVRKYAKKL…LVLGVLSGEF (279 aa)). Residues 41-59 (PFEYMILATIIANCIVLAL) traverse the membrane as a helical segment. Residues 60 to 78 (EQHLPEDDKTPMSRRLEKT) lie on the Extracellular side of the membrane. The helical transmembrane segment at 79–97 (EPYFIGIFCFEAGIKIVAL) threads the bilayer. Over 98 to 109 (GFIFHKGSYLRN) the chain is Cytoplasmic. The helical transmembrane segment at 110-124 (GWNVMDFIVVLSGIL) threads the bilayer. Residues 125–136 (ATAGTHFNTHVD) lie on the Extracellular side of the membrane. Residues 137 to 156 (LRTLRAVRVLRPLKLVSGIP) form a helical membrane-spanning segment. The Cytoplasmic portion of the chain corresponds to 157-174 (SLQIVLKSIMKAMVPLLQ). The helical transmembrane segment at 175–195 (IGLLLFFAILMFAIIGLEFYS) threads the bilayer. The Extracellular segment spans residues 196 to 277 (GKLHRACFMN…NTNDALGATW (82 aa)). Asn-205 is a glycosylation site (N-linked (GlcNAc...) asparagine). A helical transmembrane segment spans residues 278 to 301 (NWLYFIPLIIIGSFFVLNLVLGVL). The Cytoplasmic segment spans residues 302-427 (SGEFAKERER…ISIRHMVKSQ (126 aa)). The tract at residues 325–342 (QQIERELNGYRAWIDKAE) is binding to the beta subunit. Asp-377 provides a ligand contact to Ca(2+). Residue Ser-378 is modified to Phosphoserine. Positions 379, 381, and 383 each coordinate Ca(2+). Thr-391 carries the post-translational modification Phosphothreonine. One copy of the II repeat lies at 413–657 (ERLLRISIRH…VFLAIAVDNL (245 aa)). Residues 428-447 (VFYWIVLSVVALNTACVAIV) traverse the membrane as a helical segment. Residues 448-460 (HHNQPQWLTHLLY) are Extracellular-facing. Residues 461–480 (YAEFLFLGLFLLEMSLKMYG) traverse the membrane as a helical segment. At 481–489 (MGPRLYFHS) the chain is on the cytoplasmic side. The chain crosses the membrane as a helical span at residues 490–508 (SFNCFDFGVTVGSIFEVVW). Over 509-518 (AIFRPGTSFG) the chain is Extracellular. A helical transmembrane segment spans residues 519 to 537 (ISVLRALRLLRIFKITKYW). The Cytoplasmic segment spans residues 538 to 556 (ASLRNLVVSLMSSMKSIIS). A helical membrane pass occupies residues 557-576 (LLFLLFLFIVVFALLGMQLF). At 577–629 (GGRFNFNDGTPSANFDTFPAAIMTVFQILTGEDWNEVMYNGIRSQGGVSSGMW) the chain is on the extracellular side. A helical transmembrane segment spans residues 630-654 (SAIYFIVLTLFGNYTLLNVFLAIAV). The Cytoplasmic segment spans residues 655–1100 (DNLANAQELT…TNPIRKACHY (446 aa)). Residues 680-727 (LQKAKEVSPMSAPNMPSIERDRRRRHHMSMWEPRSSHLRERRRRHHMS) are disordered. A phosphoserine mark is found at Ser-687, Ser-696, Ser-744, Ser-766, and Ser-806. Disordered regions lie at residues 820–944 (NQRS…VPRG) and 1042–1076 (NKTDGEASPLKEAETKEEEEEVEKKKQKKEKRETG). Basic residues predominate over residues 864 to 877 (RHRQSQRRSRHRRV). The span at 884–896 (SASASRSRSASQE) shows a compositional bias: low complexity. Ser-898 carries the phosphoserine modification. Composition is skewed to basic and acidic residues over residues 906-935 (DGEKEHEPQSSHRSKEPTIHEEERTQDLRR) and 1044-1055 (TDGEASPLKEAE). Ser-1049 carries the phosphoserine modification. The III repeat unit spans residues 1092–1378 (NPIRKACHYI…IFVALIIITF (287 aa)). The chain crosses the membrane as a helical span at residues 1101–1117 (IVNLRYFEMCILLVIAA). The Extracellular segment spans residues 1118–1141 (SSIALAAEDPVLTNSERNKVLRYF). A helical transmembrane segment spans residues 1142–1161 (DYVFTGVFTFEMVIKMIDQG). The Cytoplasmic segment spans residues 1162–1169 (LILQDGSY). The chain crosses the membrane as a helical span at residues 1170 to 1192 (FRDLWNILDFVVVVGALVAFALA). The Extracellular portion of the chain corresponds to 1193–1206 (NALGTNKGRDIKTI). Residues 1207-1224 (KSLRVLRVLRPLKTIKRL) traverse the membrane as a helical segment. The Cytoplasmic segment spans residues 1225–1243 (PKLKAVFDCVVTSLKNVFN). A helical transmembrane segment spans residues 1244–1263 (ILIVYKLFMFIFAVIAVQLF). At 1264-1350 (KGKFFYCTDS…RGPSRSNRME (87 aa)) the chain is on the extracellular side. The chain crosses the membrane as a helical span at residues 1351 to 1374 (MSIFYVVYFVVFPFFFVNIFVALI). Residues 1375 to 1431 (IITFQEQGDKMMEECSLEKNERACIDFAISAKPLTRYMPQNRHTFQYRVWHFVVSPS) lie on the Cytoplasmic side of the membrane. An IV repeat occupies 1415–1678 (NRHTFQYRVW…LFVAVIMDNF (264 aa)). Residues 1432–1450 (FEYTIMAMIALNTVVLMMK) form a helical membrane-spanning segment. The Extracellular segment spans residues 1451 to 1467 (YYSAPWTYELALKYLNI). A helical membrane pass occupies residues 1468 to 1485 (AFTMVFSLECVLKVIAFG). Topologically, residues 1486-1493 (FLNYFRDT) are cytoplasmic. A helical membrane pass occupies residues 1494–1512 (WNIFDFITVIGSITEIILT). Over 1513–1523 (DSKLVNTSGFN) the chain is Extracellular. 2 N-linked (GlcNAc...) asparagine glycosylation sites follow: Asn-1518 and Asn-1523. A helical transmembrane segment spans residues 1524–1542 (MSFLKLFRAARLIKLLRQG). Over 1543-1561 (YTIRILLWTFVQSFKALPY) the chain is Cytoplasmic. A helical transmembrane segment spans residues 1562–1581 (VCLLIAMLFFIYAIIGMQVF). Residues 1582-1650 (GNIKLDEESH…NESERCGTDL (69 aa)) lie on the Extracellular side of the membrane. Asn-1641 carries an N-linked (GlcNAc...) asparagine glycan. Residues 1651-1676 (AYVYFVSFIFFCSFLMLNLFVAVIMD) traverse the membrane as a helical segment. The Cytoplasmic segment spans residues 1677–2222 (NFEYLTRDSS…LSDTEEDDKC (546 aa)). Positions 1691–1726 (HHLDEFVRVWAEYDRAACGRIHYTEMYEMLTLMSPP) constitute an EF-hand domain. Asp-1704, Arg-1710, and Glu-1715 together coordinate Ca(2+). The disordered stretch occupies residues 1970 to 2135 (SAHRLNSDSG…QQGQHPSPQH (166 aa)). Residues 1974 to 1994 (LNSDSGHKSDTHRSGGRERGR) are compositionally biased toward basic and acidic residues. Phosphoserine occurs at positions 2003 and 2022. A compositionally biased stretch (basic and acidic residues) spans 2010 to 2027 (NSEERGTQADWESPERRQ). Residues 2046–2061 (SLSESSIPSISDTSTP) are compositionally biased toward low complexity. The segment covering 2104–2123 (LASQALESNSACLTESSNSL) has biased composition (polar residues). Positions 2124–2135 (HPQQGQHPSPQH) are enriched in low complexity.

Belongs to the calcium channel alpha-1 subunit (TC 1.A.1.11) family. CACNA1E subfamily. In terms of assembly, interacts with EFHC1. Voltage-dependent calcium channels are multisubunit complexes, consisting of alpha-1, alpha-2, beta and delta subunits in a 1:1:1:1 ratio. The channel activity is directed by the pore-forming and voltage-sensitive alpha-1 subunit. In many cases, this subunit is sufficient to generate voltage-sensitive calcium channel activity. The auxiliary subunits beta and alpha-2/delta linked by a disulfide bridge regulate the channel activity. Expressed in central nervous system and in insulinoma.

The protein localises to the membrane. The enzyme catalyses Ca(2+)(in) = Ca(2+)(out). Voltage-sensitive calcium channels (VSCC) mediate the entry of calcium ions into excitable cells and are also involved in a variety of calcium-dependent processes, including muscle contraction, hormone or neurotransmitter release, gene expression, cell motility, cell division and cell death. The isoform alpha-1E gives rise to R-type calcium currents. R-type calcium channels belong to the 'high-voltage activated' (HVA) group and are blocked by nickel. They are however insensitive to dihydropyridines (DHP). Calcium channels containing alpha-1E subunit could be involved in the modulation of firing patterns of neurons which is important for information processing. The protein is Voltage-dependent R-type calcium channel subunit alpha-1E (Cacna1e) of Rattus norvegicus (Rat).